The following is a 123-amino-acid chain: Small ribosomal subunit protein uS13 (123 aa).

This sequence belongs to the universal ribosomal protein uS13 family. In terms of assembly, part of the 30S ribosomal subunit. Forms a loose heterodimer with protein S19. Forms two bridges to the 50S subunit in the 70S ribosome.

Its function is as follows. Located at the top of the head of the 30S subunit, it contacts several helices of the 16S rRNA. In the 70S ribosome it contacts the 23S rRNA (bridge B1a) and protein L5 of the 50S subunit (bridge B1b), connecting the 2 subunits; these bridges are implicated in subunit movement. Contacts the tRNAs in the A and P-sites. In Anaplasma marginale (strain St. Maries), this protein is Small ribosomal subunit protein uS13.